A 368-amino-acid polypeptide reads, in one-letter code: H-2 class I histocompatibility antigen, D-P alpha chain (368 aa).

An N-terminal signal peptide occupies residues 1–21; it reads MAPRTLLLLLAAALAPTQTRA. Positions 22–111 are alpha-1; that stretch reads GPHSLRYFVT…LLGYYNQSKG (90 aa). At 22–303 the chain is on the extracellular side; the sequence is GPHSLRYFVT…RWEPPPSTDS (282 aa). An N-linked (GlcNAc...) asparagine glycan is attached at Asn107. Positions 112 to 203 are alpha-2; the sequence is GSHTIQGMRG…ELGNATLLCT (92 aa). Cys122 and Cys185 are disulfide-bonded. 2 N-linked (GlcNAc...) asparagine glycosylation sites follow: Asn197 and Asn277. Residues 204 to 295 form an alpha-3 region; that stretch reads DPPKAHVTHH…GLPEPLTLRW (92 aa). Residues 206-294 enclose the Ig-like C1-type domain; that stretch reads PKAHVTHHPR…EGLPEPLTLR (89 aa). A disulfide bridge connects residues Cys224 and Cys280. A connecting peptide region spans residues 296-303; sequence EPPPSTDS. Residues 304 to 330 traverse the membrane as a helical segment; that stretch reads YMVIVAVLVVLGAVFIIGAVVAFVMMM. The Cytoplasmic portion of the chain corresponds to 331–368; it reads RRNTGGKGGDYTLAPGSQSSEMSLRDCKVMVHDSHSLA. 2 positions are modified to phosphoserine: Ser350 and Ser353.

The protein belongs to the MHC class I family. In terms of assembly, heterodimer of an alpha chain and a beta chain (beta-2-microglobulin).

Its subcellular location is the membrane. Its function is as follows. Involved in the presentation of foreign antigens to the immune system. In Mus musculus (Mouse), this protein is H-2 class I histocompatibility antigen, D-P alpha chain (H2-D1).